Consider the following 397-residue polypeptide: Tauropine dehydrogenase (397 aa).

Belongs to the lysopine/nopaline/octopine/opine/vitopine dehydrogenases family.

The enzyme catalyses tauropine + NAD(+) + H2O = taurine + pyruvate + NADH + H(+). Its activity is regulated as follows. Subject to substrate inhibition by pyruvate for the reverse reaction but not for the forward reaction of the tauropine dehydrogenase activity. In terms of biological role, may play a role in maintaining a redox balance during environmental and functional hypoxia. Exhibits high specificity for taurine and in addition, requires both alpha amino group and C-2 carbon chain length as a critical factor for active site binding of the amino acid. A methyl group in the beta position may be critical for active site binding of the keto acid. In the reverse reaction requires NAD(H) for the activity but not NADP(H). This chain is Tauropine dehydrogenase, found in Arabella iricolor (Opal worm).